The chain runs to 376 residues: Ribonucleoside-diphosphate reductase 1 subunit beta (376 aa).

Fe cation is bound by residues D85, E116, and H119. Y123 is a catalytic residue. Positions 205, 239, and 242 each coordinate Fe cation.

This sequence belongs to the ribonucleoside diphosphate reductase small chain family. In terms of assembly, tetramer of two alpha (R1) and two beta (R2) subunits. The B1 protein is a dimer of alpha subunits. A radical transfer pathway occurs between Tyr-123 of R2 and R1. Requires Fe cation as cofactor.

The enzyme catalyses a 2'-deoxyribonucleoside 5'-diphosphate + [thioredoxin]-disulfide + H2O = a ribonucleoside 5'-diphosphate + [thioredoxin]-dithiol. Functionally, provides the precursors necessary for DNA synthesis. Catalyzes the biosynthesis of deoxyribonucleotides from the corresponding ribonucleotides. R2 contains the tyrosyl radical required for catalysis. The chain is Ribonucleoside-diphosphate reductase 1 subunit beta (nrdB) from Salmonella typhimurium (strain LT2 / SGSC1412 / ATCC 700720).